Here is a 553-residue protein sequence, read N- to C-terminus: Solute carrier family 22 member 2 (553 aa).

Residues 1–21 (MPTVDDILEHIGEFHLFQKQT) lie on the Cytoplasmic side of the membrane. The chain crosses the membrane as a helical span at residues 22-42 (FFLLALLSGAFTPIYVGIVFL). The Extracellular portion of the chain corresponds to 43–150 (GFTPNHHCRS…LVCAHSWMLD (108 aa)). A glycan (N-linked (GlcNAc...) asparagine) is linked at Asn71. A helical membrane pass occupies residues 151–171 (LFQSLVNVGFFIGAVGIGYLA). Residues 172–177 (DRFGRK) lie on the Cytoplasmic side of the membrane. Residues 178–198 (FCLLVTILINAISGVLMAISP) form a helical membrane-spanning segment. The Extracellular segment spans residues 199 to 210 (NYAWMLVFRFLQ). Residues 211 to 231 (GLVSKAGWLIGYILITEFVGL) form a helical membrane-spanning segment. Residues 232–238 (GYRRTVG) are Cytoplasmic-facing. A helical membrane pass occupies residues 239–259 (ICYQIAFTVGLLILAGVAYAL). Residues 260–263 (PNWR) lie on the Extracellular side of the membrane. A helical membrane pass occupies residues 264–284 (WLQFAVTLPNFCFLLYFWCIP). Residues 284 to 288 (PESPR) carry the Proline-rich sequence motif. The Cytoplasmic portion of the chain corresponds to 285-348 (ESPRWLISQN…VRTPQIRKHT (64 aa)). A helical transmembrane segment spans residues 349 to 369 (LILMYNWFTSSVLYQGLIMHM). At 370–375 (GLAGDN) the chain is on the extracellular side. A helical transmembrane segment spans residues 376–396 (IYLDFFYSALVEFPAAFIIIL). Residues 397–404 (TIDRIGRR) lie on the Cytoplasmic side of the membrane. A helical transmembrane segment spans residues 405-425 (YPWAVSNMVAGAACLASVFIP). Over 426–432 (DDLQWLK) the chain is Extracellular. Residues 433–453 (ITVACLGRMGITIAYEMVCLV) traverse the membrane as a helical segment. The Cytoplasmic segment spans residues 454-464 (NAELYPTYIRN). Residues 465-485 (LAVLVCSSMCDIGGIVTPFLV) traverse the membrane as a helical segment. Topologically, residues 486-494 (YRLTDIWLE) are extracellular. A helical membrane pass occupies residues 495-515 (FPLVVFAVVGLVAGGLVLLLP). Residues 516 to 553 (ETKGKALPETIEDAEKMQRPRKKKEKRIYLQVKKAELS) lie on the Cytoplasmic side of the membrane.

It belongs to the major facilitator (TC 2.A.1) superfamily. Organic cation transporter (TC 2.A.1.19) family. In terms of processing, tyrosine phosphorylated by tyrosine-protein kinase YES1. Expressed in kidney and ureter. To a lower extent, also expressed in brain and embryo.

It is found in the basolateral cell membrane. It localises to the basal cell membrane. The protein localises to the apical cell membrane. It carries out the reaction (R)-noradrenaline(out) = (R)-noradrenaline(in). The catalysed reaction is (R)-adrenaline(out) = (R)-adrenaline(in). It catalyses the reaction serotonin(out) = serotonin(in). The enzyme catalyses dopamine(out) = dopamine(in). It carries out the reaction histamine(out) = histamine(in). The catalysed reaction is thiamine(in) = thiamine(out). It catalyses the reaction creatinine(in) = creatinine(out). The enzyme catalyses 1-methylnicotinamide(out) = 1-methylnicotinamide(in). It carries out the reaction guanidine(out) = guanidine(in). The catalysed reaction is choline(out) = choline(in). It catalyses the reaction agmatine(out) = agmatine(in). The enzyme catalyses putrescine(out) = putrescine(in). It carries out the reaction spermidine(in) = spermidine(out). The catalysed reaction is tyramine(in) = tyramine(out). It catalyses the reaction L-histidyl-L-proline diketopiperazine(in) = L-histidyl-L-proline diketopiperazine(out). The enzyme catalyses (R)-salsolinol(in) = (R)-salsolinol(out). It carries out the reaction N-methyl-(R)-salsolinol(in) = N-methyl-(R)-salsolinol(out). The catalysed reaction is acetylcholine(in) = acetylcholine(out). It catalyses the reaction prostaglandin F2alpha(out) = prostaglandin F2alpha(in). The enzyme catalyses prostaglandin E2(out) = prostaglandin E2(in). With respect to regulation, tyrosine phosphorylation of the transporter leads to activation of the transport activity. TEA uptake is activated by tyrosine phosphorylation. Inhibited by cGMP, most likely through a cGMP-binding protein that interacts with OCT2. Electrogenic voltage-dependent transporter that mediates the transport of a variety of organic cations such as endogenous bioactive amines, cationic drugs and xenobiotics. Functions as a Na(+)-independent, bidirectional uniporter. Cation cellular uptake or release is driven by the electrochemical potential, i.e. membrane potential and concentration gradient. However, may also engage electroneutral cation exchange when saturating concentrations of cation substrates are reached. Predominantly expressed at the basolateral membrane of hepatocytes and proximal tubules and involved in the uptake and disposition of cationic compounds by hepatic and renal clearance from the blood flow. Implicated in monoamine neurotransmitters uptake such as histamine, dopamine, adrenaline/epinephrine, noradrenaline/norepinephrine, serotonin and tyramine, thereby supporting a physiological role in the central nervous system by regulating interstitial concentrations of neurotransmitters. Also capable of transporting dopaminergic neuromodulators cyclo(his-pro), salsolinol and N-methyl-salsolinol, thereby involved in the maintenance of dopaminergic cell integrity in the central nervous system. Mediates the bidirectional transport of acetylcholine (ACh) at the apical membrane of ciliated cell in airway epithelium, thereby playing a role in luminal release of ACh from bronchial epithelium. Also transports guanidine and endogenous monoamines such as vitamin B1/thiamine, creatinine and N-1-methylnicotinamide (NMN). Mediates the uptake and efflux of quaternary ammonium compound choline. Mediates the bidirectional transport of polyamine agmatine and the uptake of polyamines putrescine and spermidine. Able to transport non-amine endogenous compounds such as prostaglandin E2 (PGE2) and prostaglandin F2-alpha (PGF2-alpha). Also involved in the uptake of xenobiotic 4-(4-(dimethylamino)styryl)-N-methylpyridinium (ASP). May contribute to regulate the transport of organic compounds in testis across the blood-testis-barrier. The sequence is that of Solute carrier family 22 member 2 from Mus musculus (Mouse).